Consider the following 432-residue polypeptide: Glutamate-1-semialdehyde 2,1-aminomutase 1 (432 aa).

At lysine 272 the chain carries N6-(pyridoxal phosphate)lysine.

Belongs to the class-III pyridoxal-phosphate-dependent aminotransferase family. HemL subfamily. In terms of assembly, homodimer. Requires pyridoxal 5'-phosphate as cofactor.

It localises to the cytoplasm. The enzyme catalyses (S)-4-amino-5-oxopentanoate = 5-aminolevulinate. It functions in the pathway porphyrin-containing compound metabolism; protoporphyrin-IX biosynthesis; 5-aminolevulinate from L-glutamyl-tRNA(Glu): step 2/2. The chain is Glutamate-1-semialdehyde 2,1-aminomutase 1 from Exiguobacterium sp. (strain ATCC BAA-1283 / AT1b).